We begin with the raw amino-acid sequence, 390 residues long: Lipid-A-disaccharide synthase (390 aa).

The protein belongs to the LpxB family.

The catalysed reaction is a lipid X + a UDP-2-N,3-O-bis[(3R)-3-hydroxyacyl]-alpha-D-glucosamine = a lipid A disaccharide + UDP + H(+). The protein operates within bacterial outer membrane biogenesis; LPS lipid A biosynthesis. In terms of biological role, condensation of UDP-2,3-diacylglucosamine and 2,3-diacylglucosamine-1-phosphate to form lipid A disaccharide, a precursor of lipid A, a phosphorylated glycolipid that anchors the lipopolysaccharide to the outer membrane of the cell. In Haemophilus ducreyi (strain 35000HP / ATCC 700724), this protein is Lipid-A-disaccharide synthase.